The primary structure comprises 182 residues: Protein canopy homolog 2 (182 aa).

The N-terminal stretch at 1 to 20 is a signal peptide; that stretch reads MKGWGWLALLLGALLGTAWA. The 152-residue stretch at 24 to 175 folds into the Saposin B-type domain; it reads QDLHCGACRA…KRTDLCDHAL (152 aa). Intrachain disulfides connect Cys28–Cys171, Cys31–Cys164, and Cys86–Cys137. The residue at position 115 (Ser115) is a Phosphoserine. The Prevents secretion from ER motif lies at 179–182; that stretch reads HDEL.

Belongs to the canopy family. In terms of assembly, interacts with MYLIP/MIR. As to expression, expressed in different tissues. Highest levels are detected in adult placenta, liver and pancreas.

The protein resides in the endoplasmic reticulum. In terms of biological role, positive regulator of neurite outgrowth by stabilizing myosin regulatory light chain (MRLC). It prevents MIR-mediated MRLC ubiquitination and its subsequent proteasomal degradation. In Homo sapiens (Human), this protein is Protein canopy homolog 2 (CNPY2).